Reading from the N-terminus, the 624-residue chain is Probable potassium transport system protein Kup 1 (624 aa).

The next 12 membrane-spanning stretches (helical) occupy residues leucine 10–leucine 30, leucine 48–phenylalanine 68, proline 94–threonine 114, leucine 133–alanine 153, isoleucine 159–isoleucine 179, phenylalanine 210–glycine 230, phenylalanine 242–valine 262, proline 270–alanine 290, isoleucine 331–phenylalanine 351, isoleucine 363–isoleucine 383, threonine 388–alanine 408, and phenylalanine 413–serine 433.

Belongs to the HAK/KUP transporter (TC 2.A.72) family.

The protein localises to the cell inner membrane. It carries out the reaction K(+)(in) + H(+)(in) = K(+)(out) + H(+)(out). Transport of potassium into the cell. Likely operates as a K(+):H(+) symporter. This chain is Probable potassium transport system protein Kup 1, found in Legionella pneumophila (strain Paris).